The sequence spans 266 residues: Blue copper protein (266 aa).

A signal peptide spans 1-24; that stretch reads MAYSKILFCFMIGFVGFLPAITMA. Phytocyanin domains are found at residues 25 to 56, 57 to 102, and 116 to 216; these read TQYL…GDTL, APPP…TVED, and TEYW…TVEG. The N-linked (GlcNAc...) asparagine glycan is linked to N47. H156 serves as a coordination point for Cu cation. N162 carries an N-linked (GlcNAc...) asparagine glycan. A disulfide bond links C169 and C203. Residues C197, H202, and Q208 each contribute to the Cu cation site. Residues 245-265 traverse the membrane as a helical segment; it reads ITSPYKMFVGGAVSIWTILTL.

The protein resides in the membrane. The protein is Blue copper protein of Petunia hybrida (Petunia).